We begin with the raw amino-acid sequence, 455 residues long: GTPase Der (455 aa).

EngA-type G domains lie at 4–169 (PVVA…PPKD) and 178–353 (IQMA…EQHR). GTP contacts are provided by residues 10–17 (GRPNVGKS), 57–61 (DTGGL), 120–123 (NKCE), 184–191 (GRPNVGKS), 231–235 (DTAGI), and 296–299 (NKWD). The region spanning 354–439 (RRVSTSVVNE…PLRLFWRGKQ (86 aa)) is the KH-like domain.

This sequence belongs to the TRAFAC class TrmE-Era-EngA-EngB-Septin-like GTPase superfamily. EngA (Der) GTPase family. Associates with the 50S ribosomal subunit.

In terms of biological role, GTPase that plays an essential role in the late steps of ribosome biogenesis. This chain is GTPase Der, found in Synechococcus sp. (strain CC9605).